Here is a 419-residue protein sequence, read N- to C-terminus: Subtilisin-like protease 2 (419 aa).

An N-terminal signal peptide occupies residues 1 to 16 (MQLLNFGLLLLPFVAG). Positions 17 to 122 (DLAPQPEPLL…VHPDQHVYLA (106 aa)) are excised as a propeptide. The region spanning 36 to 122 (QYIVTLKEGL…VHPDQHVYLA (87 aa)) is the Inhibitor I9 domain. One can recognise a Peptidase S8 domain in the interval 131-419 (RWGLGYMSSK…IQERKFKLPK (289 aa)). Residues D169 and H201 each act as charge relay system in the active site. Residues N248, N261, and N348 are each glycosylated (N-linked (GlcNAc...) asparagine). S357 serves as the catalytic Charge relay system. N388 carries N-linked (GlcNAc...) asparagine glycosylation.

It belongs to the peptidase S8 family.

The protein localises to the secreted. Secreted subtilisin-like serine protease with keratinolytic activity that contributes to pathogenicity. This Trichophyton verrucosum (Cattle ringworm fungus) protein is Subtilisin-like protease 2 (SUB2).